The sequence spans 559 residues: Glycerol kinase (559 aa).

Thr20 is a binding site for ADP. Thr20, Ser21, and Ser22 together coordinate ATP. Sn-glycerol 3-phosphate is bound at residue Thr20. Arg24 serves as a coordination point for ADP. Residues Arg94, Glu95, and Tyr148 each contribute to the sn-glycerol 3-phosphate site. Glycerol-binding residues include Arg94, Glu95, and Tyr148. Residue Gly252 coordinates beta-D-fructose 1,6-bisphosphate. Residue Asp265 participates in sn-glycerol 3-phosphate binding. Residues Asp265 and Gln266 each coordinate glycerol. ADP is bound by residues Thr287, Gly332, Gly433, and Asn437. ATP-binding residues include Thr287, Gly332, and Gly433. Glu501 is a Zn(2+) binding site. Residues 532-552 (IFCSLPLGFFIVSSVVMLIGA) traverse the membrane as a helical segment.

The protein belongs to the FGGY kinase family.

The protein resides in the mitochondrion outer membrane. It is found in the nucleus. The protein localises to the cytoplasm. It localises to the cytosol. The enzyme catalyses glycerol + ATP = sn-glycerol 3-phosphate + ADP + H(+). The protein operates within polyol metabolism; glycerol degradation via glycerol kinase pathway; sn-glycerol 3-phosphate from glycerol: step 1/1. Functionally, kinase that plays a key role in glycerol metabolism, catalyzing its phosphorylation to produce sn-glycerol 3-phosphate. Sn-glycerol 3-phosphate is a crucial intermediate in various metabolic pathways, such as the synthesis of glycerolipids and triglycerides, glycogenesis, glycolysis and gluconeogenesis. The polypeptide is Glycerol kinase (Bos taurus (Bovine)).